The chain runs to 228 residues: F-box protein At5g67140 (228 aa).

The F-box domain maps to 4–51; sequence EAAIDRLPLDLLAYIFSLATSFTVLAQASGVCKKWRKAVNQSMARRET.

This is F-box protein At5g67140 from Arabidopsis thaliana (Mouse-ear cress).